A 693-amino-acid polypeptide reads, in one-letter code: Golgin subfamily A member 6A (693 aa).

Residues 14–611 (LEESRQNKLA…KLLELQELVL (598 aa)) adopt a coiled-coil conformation. Disordered stretches follow at residues 20–69 (NKLA…PGDS), 497–547 (LPGE…GTEQ), and 661–693 (NVEPAPGAAREGSPHDNPTVQQIVQLSPVMQDT). The span at 54–69 (SPETTTSGGCHSPGDS) shows a compositional bias: polar residues. Residues 537 to 547 (LPKEKADGTEQ) show a composition bias toward basic and acidic residues. Over residues 676–693 (DNPTVQQIVQLSPVMQDT) the composition is skewed to polar residues.

Belongs to the GOLGA6 family. As to expression, highly expressed in seminiferous tubes in testis. Highly expressed in spermatids, barely detectable in late pachytene spermatocytes, and not detectable in spermatogonia. Detected at intermediate levels in pancreas and lymph nodes, and at much lower levels in spleen, peripheral blood leukocytes, skeletal muscle, liver, lung, placenta, brain and heart.

The sequence is that of Golgin subfamily A member 6A (GOLGA6A) from Homo sapiens (Human).